We begin with the raw amino-acid sequence, 453 residues long: Gastrin/cholecystokinin type B receptor (453 aa).

Residues Met-1–Arg-57 lie on the Extracellular side of the membrane. Asn-7, Asn-30, and Asn-36 each carry an N-linked (GlcNAc...) asparagine glycan. Residues Ile-58–Leu-79 traverse the membrane as a helical segment. At Gly-80–Thr-87 the chain is on the cytoplasmic side. A helical membrane pass occupies residues Val-88–Pro-109. Residues Phe-110–Ser-131 lie on the Extracellular side of the membrane. Cysteines 127 and 205 form a disulfide. The chain crosses the membrane as a helical span at residues Tyr-132–Leu-150. Residues Glu-151 to His-170 lie on the Cytoplasmic side of the membrane. A helical transmembrane segment spans residues Ala-171–Tyr-189. Residues Pro-190 to Ser-219 are Extracellular-facing. Residues Val-220–Ser-242 traverse the membrane as a helical segment. Topologically, residues Arg-243–Arg-339 are cytoplasmic. Residues Ser-257–Pro-276 form a disordered region. A helical membrane pass occupies residues Met-340–Trp-361. The Extracellular portion of the chain corresponds to Arg-362–Ser-379. A helical transmembrane segment spans residues Phe-380 to His-400. Over Arg-401–Gly-453 the chain is Cytoplasmic. Residue Cys-414 is the site of S-palmitoyl cysteine attachment.

This sequence belongs to the G-protein coupled receptor 1 family.

Its subcellular location is the cell membrane. Functionally, receptor for gastrin and cholecystokinin. The CCK-B receptors occur throughout the central nervous system where they modulate anxiety, analgesia, arousal, and neuroleptic activity. This receptor mediates its action by association with G proteins that activate a phosphatidylinositol-calcium second messenger system. The chain is Gastrin/cholecystokinin type B receptor (Cckbr) from Mus musculus (Mouse).